Here is a 413-residue protein sequence, read N- to C-terminus: Probable tRNA sulfurtransferase (413 aa).

Residues T61–K171 form the THUMP domain. Residues M189–L190, H214–F215, R275, G297, and Q306 contribute to the ATP site.

This sequence belongs to the ThiI family.

The protein resides in the cytoplasm. It carries out the reaction [ThiI sulfur-carrier protein]-S-sulfanyl-L-cysteine + a uridine in tRNA + 2 reduced [2Fe-2S]-[ferredoxin] + ATP + H(+) = [ThiI sulfur-carrier protein]-L-cysteine + a 4-thiouridine in tRNA + 2 oxidized [2Fe-2S]-[ferredoxin] + AMP + diphosphate. The catalysed reaction is [ThiS sulfur-carrier protein]-C-terminal Gly-Gly-AMP + S-sulfanyl-L-cysteinyl-[cysteine desulfurase] + AH2 = [ThiS sulfur-carrier protein]-C-terminal-Gly-aminoethanethioate + L-cysteinyl-[cysteine desulfurase] + A + AMP + 2 H(+). The protein operates within cofactor biosynthesis; thiamine diphosphate biosynthesis. Functionally, catalyzes the ATP-dependent transfer of a sulfur to tRNA to produce 4-thiouridine in position 8 of tRNAs, which functions as a near-UV photosensor. Also catalyzes the transfer of sulfur to the sulfur carrier protein ThiS, forming ThiS-thiocarboxylate. This is a step in the synthesis of thiazole, in the thiamine biosynthesis pathway. The sulfur is donated as persulfide by IscS. The sequence is that of Probable tRNA sulfurtransferase from Natranaerobius thermophilus (strain ATCC BAA-1301 / DSM 18059 / JW/NM-WN-LF).